The sequence spans 441 residues: uncharacterized protein (441 aa).

217–224 provides a ligand contact to ATP; it reads GETGTGKT.

It belongs to the GSP E family.

This is an uncharacterized protein from Bacillus anthracis.